Consider the following 464-residue polypeptide: Glutamyl-tRNA reductase (464 aa).

Residues 47–50 (TCNR), S145, 150–152 (EPQ), and Q156 contribute to the substrate site. The active-site Nucleophile is C48. 225–230 (AAGEMN) contributes to the NADP(+) binding site.

It belongs to the glutamyl-tRNA reductase family. As to quaternary structure, homodimer.

The catalysed reaction is (S)-4-amino-5-oxopentanoate + tRNA(Glu) + NADP(+) = L-glutamyl-tRNA(Glu) + NADPH + H(+). It functions in the pathway porphyrin-containing compound metabolism; protoporphyrin-IX biosynthesis; 5-aminolevulinate from L-glutamyl-tRNA(Glu): step 1/2. In terms of biological role, catalyzes the NADPH-dependent reduction of glutamyl-tRNA(Glu) to glutamate 1-semialdehyde (GSA). In Psychrobacter cryohalolentis (strain ATCC BAA-1226 / DSM 17306 / VKM B-2378 / K5), this protein is Glutamyl-tRNA reductase.